The primary structure comprises 247 residues: Protein IRON-RELATED TRANSCRIPTION FACTOR 2 (247 aa).

Positions 68-75 (HRKLSHNA) match the Nuclear localization signal motif. Residues 68 to 81 (HRKLSHNAYERDRR) are basic motif. One can recognise a bHLH domain in the interval 68–119 (HRKLSHNAYERDRRKQLNELYSSLRALLPDADHTKLSIPTTVSRVLKYIPEL). A helix-loop-helix motif region spans residues 82 to 119 (KQLNELYSSLRALLPDADHTKLSIPTTVSRVLKYIPEL).

It belongs to the bHLH protein family. In terms of assembly, forms homodimers. Interacts with BHLH156 in the nucleus. As to expression, expressed constitutively at low levels in the roots. Also observed in flowers, developing seeds, embryos and vascular bundles.

The protein localises to the nucleus. The protein resides in the cytoplasm. In terms of biological role, transcription activator that binds to the DNA motif 5'-CACGTGG-3' in the promoter of iron (Fe) deficiency-inducible genes as well as of genes involved in iron homeostasis, thus contributing to basal tolerance to iron deficiency, iron uptake from soil and iron transport, particularly during seed maturation and germination. Promotes the accumulation of mugineic acid family phytosiderophores (MAs). Required for ethylene-mediated signaling during iron deficiency responses. Improves growth and yield, especially in calcareous soil with low iron availability. Promotes iron concentration in shoots and grain. This is Protein IRON-RELATED TRANSCRIPTION FACTOR 2 from Oryza sativa subsp. japonica (Rice).